We begin with the raw amino-acid sequence, 740 residues long: E3 ubiquitin-protein ligase TRIM9 (740 aa).

The RING-type; degenerate zinc-finger motif lies at 7–30 (CPTCKQLYANPVLLPCFHALCLGC). Gly residues predominate over residues 64–73 (GNGGGAGGGA). Residues 64–114 (GNGGGAGGGAAAPVTNPNGPGTRHSSHSSAASTASSNTGSESVTSDQDQSD) form a disordered region. A compositionally biased stretch (low complexity) spans 74 to 105 (AAPVTNPNGPGTRHSSHSSAASTASSNTGSES). The B box-type 1; atypical zinc-finger motif lies at 195–244 (REALRCQMCETDPKVASLICEQCEIRYCDACRELTHPARGPLAKHTLVKP). Positions 200, 203, 225, 230, 255, 258, 277, and 283 each coordinate Zn(2+). The B box-type 2 zinc finger occupies 250–291 (QRESVCGEHEETLSQYCLSCKAPACGLCIGELRHQAHDVQSI). A coiled-coil region spans residues 294–324 (TCKAQKTELSHNLQQLSEKARSTTEFIQRLK). The 61-residue stretch at 399 to 459 (LKETDSAAFL…ARAIDNLNFI (61 aa)) folds into the COS domain. In terms of domain architecture, Fibronectin type-III spans 474 to 567 (APMTPTILPS…ELIGLQTAEV (94 aa)). A B30.2/SPRY domain is found at 549–736 (NSAGEGEYSE…TMHTAMDAPK (188 aa)).

The protein belongs to the TRIM/RBCC family. In terms of assembly, interacts (via fibronectin type-III domain) with pico. Interacts (via SPRY domain) with netrin receptor fra.

It localises to the cell projection. It is found in the axon. Its subcellular location is the perikaryon. It carries out the reaction S-ubiquitinyl-[E2 ubiquitin-conjugating enzyme]-L-cysteine + [acceptor protein]-L-lysine = [E2 ubiquitin-conjugating enzyme]-L-cysteine + N(6)-ubiquitinyl-[acceptor protein]-L-lysine.. It participates in protein modification; protein ubiquitination. Functionally, E3 ubiquitin-protein ligase activity. During embryonic and larval development, regulates the pattern of axonal projections of class IV nociceptive sensory neurons (C4da) downstream of netrin receptor fra. Regulates fine-scale topography of C4da axon terminals upon neuronal activity. During eye development, consolidates the attachment of R8 photoreceptor growth cones to the target medulla layer, probably downstream of fra. This is E3 ubiquitin-protein ligase TRIM9 from Drosophila melanogaster (Fruit fly).